Consider the following 298-residue polypeptide: tRNA dimethylallyltransferase (298 aa).

10–17 provides a ligand contact to ATP; it reads GPTASGKT. 12–17 provides a ligand contact to substrate; it reads TASGKT. The tract at residues 35–38 is interaction with substrate tRNA; the sequence is DSMC.

Belongs to the IPP transferase family. As to quaternary structure, monomer. It depends on Mg(2+) as a cofactor.

It catalyses the reaction adenosine(37) in tRNA + dimethylallyl diphosphate = N(6)-dimethylallyladenosine(37) in tRNA + diphosphate. Catalyzes the transfer of a dimethylallyl group onto the adenine at position 37 in tRNAs that read codons beginning with uridine, leading to the formation of N6-(dimethylallyl)adenosine (i(6)A). The chain is tRNA dimethylallyltransferase from Hydrogenobaculum sp. (strain Y04AAS1).